Reading from the N-terminus, the 222-residue chain is Germin-like protein 11-1 (222 aa).

The first 23 residues, 1-23, serve as a signal peptide directing secretion; it reads MKLSTVLCCYLLLLGLFAPEIIS. A disulfide bond links C32 and C49. A Cupin type-1 domain is found at 72–195; it reads DNMVRSSANI…AMFAPDSEVA (124 aa). The Mn(2+) site is built by H111, H113, E118, and H157.

It belongs to the germin family. As to quaternary structure, oligomer (believed to be a pentamer but probably hexamer).

It localises to the secreted. The protein resides in the extracellular space. The protein localises to the apoplast. In terms of biological role, may play a role in plant defense. Probably has no oxalate oxidase activity even if the active site is conserved. The protein is Germin-like protein 11-1 of Oryza sativa subsp. japonica (Rice).